The chain runs to 527 residues: MATQQQQQQQQQQQQQIKARKDIQIQQAQSASDILGPPEISETEITTESILGDGSFGTVYKGRCRLKDVAVKVMLKQVDQKTLTDFRKEVAIMSKIFHPNIVLFLGACTSTPGKLMICTELMKGNLESLLLDPMVKLPLITRMRMAKDAALGVLWLHSSNPVFIHRDLKTSNLLVDANLTVKVCDFGLSQIKQRGENLKDGQDGAKGTPLWMAPEVLQGRLFNEKADVYSFGLVLWQIFTRQELFPEFDNFFKFVAAICEKQLRPSIPDDCPKSLKELIQKCWDPNPEVRPSFEGIVSELEEIIIDCCIPDEYGAILWKNHFKHENEANWKDFINVFSNFVGLTNANTPSMSDLLQFSPNLNGSTIELNFKCLKSIIVSSPKGPHEEEVVLMEQFGKVLAWFGNLKEDGSQILDKIRQLMECAWFHGDISTSESENRLRQKPEGTFLVRFSTSEYGAYTISKVSKNGGISHQRIHRPQGKFQVNNSKYLSVKELITGEAQALGINTPCLGSRFLSLIYKAQLSGYIN.

Positions 45–304 (ITTESILGDG…GIVSELEEII (260 aa)) constitute a Protein kinase domain. ATP-binding positions include 51 to 59 (LGDGSFGTV) and Lys72. Catalysis depends on Asp167, which acts as the Proton acceptor. An SH2 domain is found at 424 to 513 (WFHGDISTSE…INTPCLGSRF (90 aa)).

It belongs to the protein kinase superfamily. TKL Ser/Thr protein kinase family. SH2 domain-containing protein kinase subfamily.

Its subcellular location is the membrane. It catalyses the reaction L-seryl-[protein] + ATP = O-phospho-L-seryl-[protein] + ADP + H(+). It carries out the reaction L-threonyl-[protein] + ATP = O-phospho-L-threonyl-[protein] + ADP + H(+). In terms of biological role, required for proper chemotaxis and phagocytosis; proper spatiotemporal control of F-actin levels in chemotaxing cells. Negative regulator of the PI3K (phosphatidylinositol 3 kinase) pathway. Predominantly phosphorylates serines and threonines and tyrosines at a lower level. The sequence is that of Dual specificity protein kinase shkA (shkA) from Dictyostelium discoideum (Social amoeba).